A 356-amino-acid chain; its full sequence is 3-dehydroquinate synthase (356 aa).

Residues 101–105 (GVIGD), 125–126 (TT), Lys-138, and Lys-147 contribute to the NAD(+) site. Positions 180, 243, and 260 each coordinate Zn(2+).

Belongs to the sugar phosphate cyclases superfamily. Dehydroquinate synthase family. Requires Co(2+) as cofactor. Zn(2+) serves as cofactor. It depends on NAD(+) as a cofactor.

It localises to the cytoplasm. The enzyme catalyses 7-phospho-2-dehydro-3-deoxy-D-arabino-heptonate = 3-dehydroquinate + phosphate. Its pathway is metabolic intermediate biosynthesis; chorismate biosynthesis; chorismate from D-erythrose 4-phosphate and phosphoenolpyruvate: step 2/7. Catalyzes the conversion of 3-deoxy-D-arabino-heptulosonate 7-phosphate (DAHP) to dehydroquinate (DHQ). The protein is 3-dehydroquinate synthase of Alkaliphilus metalliredigens (strain QYMF).